We begin with the raw amino-acid sequence, 246 residues long: Type III pantothenate kinase (246 aa).

An ATP-binding site is contributed by 11-18 (DIGNSFIK). Residues tyrosine 95 and 102–105 (GVDR) contribute to the substrate site. The Proton acceptor role is filled by aspartate 104. Aspartate 125 is a K(+) binding site. Threonine 128 is an ATP binding site. Threonine 179 is a binding site for substrate.

It belongs to the type III pantothenate kinase family. Homodimer. The cofactor is NH4(+). It depends on K(+) as a cofactor.

The protein localises to the cytoplasm. The enzyme catalyses (R)-pantothenate + ATP = (R)-4'-phosphopantothenate + ADP + H(+). The protein operates within cofactor biosynthesis; coenzyme A biosynthesis; CoA from (R)-pantothenate: step 1/5. Its function is as follows. Catalyzes the phosphorylation of pantothenate (Pan), the first step in CoA biosynthesis. This Pseudoalteromonas atlantica (strain T6c / ATCC BAA-1087) protein is Type III pantothenate kinase.